The chain runs to 231 residues: Orotidine 5'-phosphate decarboxylase (231 aa).

Substrate is bound by residues Asp-11, Lys-33, 60-69, Thr-117, Arg-178, Gln-187, Gly-207, and Arg-208; that span reads DLKFHDIPNT. The active-site Proton donor is Lys-62.

It belongs to the OMP decarboxylase family. Type 1 subfamily. As to quaternary structure, homodimer.

It catalyses the reaction orotidine 5'-phosphate + H(+) = UMP + CO2. It functions in the pathway pyrimidine metabolism; UMP biosynthesis via de novo pathway; UMP from orotate: step 2/2. Its function is as follows. Catalyzes the decarboxylation of orotidine 5'-monophosphate (OMP) to uridine 5'-monophosphate (UMP). The sequence is that of Orotidine 5'-phosphate decarboxylase from Nitrosomonas europaea (strain ATCC 19718 / CIP 103999 / KCTC 2705 / NBRC 14298).